Here is a 156-residue protein sequence, read N- to C-terminus: uncharacterized protein (156 aa).

The next 3 helical transmembrane spans lie at 21–41, 54–74, and 80–100; these read GVLF…AISL, TICS…IDFA, and SVLV…WALF.

It localises to the membrane. This is an uncharacterized protein from Saccharomyces cerevisiae (strain ATCC 204508 / S288c) (Baker's yeast).